Reading from the N-terminus, the 151-residue chain is MAPRKNKTVKEEVQVSLGPQVREGEIVFGVAHIYASFNDTFVHVTDLSGKETISRVTGGMKVKADRDEASPYAAMLAAQDVAEKCKSLGITALHIKLRATGGNRTKTPGPGAQSALRALARSSMKIGRIEDVTPIPSDSTRRKGGRRGRRL.

The tract at residues 130–151 (EDVTPIPSDSTRRKGGRRGRRL) is disordered. Positions 142–151 (RKGGRRGRRL) are enriched in basic residues.

The protein belongs to the universal ribosomal protein uS11 family.

The polypeptide is Small ribosomal subunit protein uS11 (Aedes aegypti (Yellowfever mosquito)).